We begin with the raw amino-acid sequence, 211 residues long: MIDLHNIRNEYSQQALSEKQCDDDPLKQLEKWLNEAIQAKVNEPTAMNVATVGENGKPSSRVVLLKEVNERGLVFFTNYHSHKGRDLAVNPFAAVNLFWAELQRQVRVEGRVERISPQASDEYFASRPYTSRIGAWASEQSAVISGKNSLLTKAALIAAKHPLQVPRPPHWGGYIVIPELIEFWQGRPSRLHDRIRYRLEKGEWVRERLSP.

Substrate contacts are provided by residues 8–11 (RNEY) and Lys-66. Residues 61–66 (RVVLLK), 76–77 (FT), Lys-83, and Gln-105 each bind FMN. Tyr-123, Arg-127, and Ser-131 together coordinate substrate. FMN-binding positions include 140 to 141 (QS) and Trp-184. 190 to 192 (RLH) serves as a coordination point for substrate. Arg-194 is a binding site for FMN.

It belongs to the pyridoxamine 5'-phosphate oxidase family. As to quaternary structure, homodimer. It depends on FMN as a cofactor.

It carries out the reaction pyridoxamine 5'-phosphate + O2 + H2O = pyridoxal 5'-phosphate + H2O2 + NH4(+). It catalyses the reaction pyridoxine 5'-phosphate + O2 = pyridoxal 5'-phosphate + H2O2. Its pathway is cofactor metabolism; pyridoxal 5'-phosphate salvage; pyridoxal 5'-phosphate from pyridoxamine 5'-phosphate: step 1/1. It functions in the pathway cofactor metabolism; pyridoxal 5'-phosphate salvage; pyridoxal 5'-phosphate from pyridoxine 5'-phosphate: step 1/1. Functionally, catalyzes the oxidation of either pyridoxine 5'-phosphate (PNP) or pyridoxamine 5'-phosphate (PMP) into pyridoxal 5'-phosphate (PLP). In Mannheimia succiniciproducens (strain KCTC 0769BP / MBEL55E), this protein is Pyridoxine/pyridoxamine 5'-phosphate oxidase.